A 126-amino-acid polypeptide reads, in one-letter code: Ribulose bisphosphate carboxylase small subunit, chloroplastic 1 (126 aa).

This sequence belongs to the RuBisCO small chain family. In terms of assembly, heterohexadecamer of 8 large and 8 small subunits.

The protein localises to the plastid. Its subcellular location is the chloroplast. RuBisCO catalyzes two reactions: the carboxylation of D-ribulose 1,5-bisphosphate, the primary event in carbon dioxide fixation, as well as the oxidative fragmentation of the pentose substrate. Both reactions occur simultaneously and in competition at the same active site. Although the small subunit is not catalytic it is essential for maximal activity. The protein is Ribulose bisphosphate carboxylase small subunit, chloroplastic 1 of Acetabularia peniculus (Green alga).